A 96-amino-acid polypeptide reads, in one-letter code: Small ribosomal subunit protein bS6 (96 aa).

The protein belongs to the bacterial ribosomal protein bS6 family.

In terms of biological role, binds together with bS18 to 16S ribosomal RNA. The polypeptide is Small ribosomal subunit protein bS6 (Beutenbergia cavernae (strain ATCC BAA-8 / DSM 12333 / CCUG 43141 / JCM 11478 / NBRC 16432 / NCIMB 13614 / HKI 0122)).